The following is a 190-amino-acid chain: MSRYLGPRVRIIRRLGILPAFTNKSPNKRTGVPGEHAHKTRKLSEYAGVLQGEQKLQYYYGITNNQLARYFRQAKKSRASTGIELLKMLETRLDHVVYRAGFAPTLPAARQLVNHGHVKVNGNQVTIASFACQVNHIIEVKAKSPSSAQLPPYLQVENQFVKMIQPVEKDWLAFRVNELLVVEYYTRVGA.

In terms of domain architecture, S4 RNA-binding spans 92 to 152 (RLDHVVYRAG…KSPSSAQLPP (61 aa)).

The protein belongs to the universal ribosomal protein uS4 family. In terms of assembly, part of the 30S ribosomal subunit. Contacts protein S5. The interaction surface between S4 and S5 is involved in control of translational fidelity.

It localises to the plastid. The protein localises to the chloroplast. Functionally, one of the primary rRNA binding proteins, it binds directly to 16S rRNA where it nucleates assembly of the body of the 30S subunit. In terms of biological role, with S5 and S12 plays an important role in translational accuracy. In Cyanidioschyzon merolae (strain NIES-3377 / 10D) (Unicellular red alga), this protein is Small ribosomal subunit protein uS4c (rps4).